Reading from the N-terminus, the 336-residue chain is Probable GTPase MT1543 (336 aa).

GTP is bound by residues 67 to 75, Asp209, and 245 to 247; these read GVPGVGKST and SAV.

The protein belongs to the SIMIBI class G3E GTPase family. ArgK/MeaB subfamily. Homodimer.

In terms of biological role, probable GTPase. May also bind and hydrolyze ATP. May function as chaperone. This is Probable GTPase MT1543 from Mycobacterium tuberculosis (strain CDC 1551 / Oshkosh).